The sequence spans 313 residues: MLEKQSVNQKEQYNFNKLQKRLRRNVGQAIADFNMIEEGDRVMVCLSGGKDSYTMLDILQSLQKSAPINFSLIAVNLDQKQPGFPEDILPAYLDKQGVEYKIVEENTYGIVKEIIPDGKTTCSLCSRLRRGILYRTATELGATKIALGHHRDDILQTLFLNMFYGGKLKGMPPKLMSDDGKHIVIRPLAYCREKDIERFAVAREYPIIPCNLCGSQPNLQRQVIKDMLRDWDKQYPGRIETMFSAMQNVVPSHLNDHKLFDFKSITHDSDIIDGGDLAFDREALPLNPVGWQPEDDEDTEKRPSVRLDVLEIK.

The short motif at Ser-47 to Ser-52 is the PP-loop motif element. Residues Cys-122, Cys-125, and Cys-213 each contribute to the [4Fe-4S] cluster site.

The protein belongs to the TtcA family. Homodimer. Requires Mg(2+) as cofactor. The cofactor is [4Fe-4S] cluster.

It is found in the cytoplasm. The catalysed reaction is cytidine(32) in tRNA + S-sulfanyl-L-cysteinyl-[cysteine desulfurase] + AH2 + ATP = 2-thiocytidine(32) in tRNA + L-cysteinyl-[cysteine desulfurase] + A + AMP + diphosphate + H(+). It functions in the pathway tRNA modification. In terms of biological role, catalyzes the ATP-dependent 2-thiolation of cytidine in position 32 of tRNA, to form 2-thiocytidine (s(2)C32). The sulfur atoms are provided by the cysteine/cysteine desulfurase (IscS) system. The protein is tRNA-cytidine(32) 2-sulfurtransferase of Yersinia pseudotuberculosis serotype IB (strain PB1/+).